The sequence spans 362 residues: Dihydroorotate dehydrogenase (quinone) (362 aa).

FMN-binding positions include 62–66 (AGYDK) and threonine 86. Lysine 66 is a binding site for substrate. Residue 111-115 (NRLGF) coordinates substrate. The FMN site is built by asparagine 139 and asparagine 170. Asparagine 170 is a binding site for substrate. Serine 173 (nucleophile) is an active-site residue. Asparagine 175 is a substrate binding site. FMN is bound by residues lysine 215 and serine 243. Substrate is bound at residue 244–245 (NT). FMN is bound by residues glycine 266, glycine 295, and 316-317 (YS).

Belongs to the dihydroorotate dehydrogenase family. Type 2 subfamily. As to quaternary structure, monomer. FMN is required as a cofactor.

Its subcellular location is the cell membrane. It carries out the reaction (S)-dihydroorotate + a quinone = orotate + a quinol. It participates in pyrimidine metabolism; UMP biosynthesis via de novo pathway; orotate from (S)-dihydroorotate (quinone route): step 1/1. Catalyzes the conversion of dihydroorotate to orotate with quinone as electron acceptor. This is Dihydroorotate dehydrogenase (quinone) from Rhizobium leguminosarum bv. trifolii (strain WSM2304).